The primary structure comprises 200 residues: GTP-binding protein ypt2 (200 aa).

Residue 16–23 participates in GTP binding; that stretch reads GDSGVGKS. The short motif at 38 to 46 is the Effector region element; the sequence is FITTIGIDF. GTP-binding positions include 64–68 and 122–125; these read DTAGQ and NKCD. S-geranylgeranyl cysteine attachment occurs at residues Cys199 and Cys200.

This sequence belongs to the small GTPase superfamily. Rab family.

The protein localises to the cell membrane. In terms of biological role, protein transport. Probably involved in vesicular traffic. In Schizosaccharomyces pombe (strain 972 / ATCC 24843) (Fission yeast), this protein is GTP-binding protein ypt2 (ypt2).